The primary structure comprises 190 residues: Ubiquinol-cytochrome c reductase iron-sulfur subunit (190 aa).

The helical transmembrane segment at Phe-18–Val-39 threads the bilayer. Residues Gly-95–Lys-188 form the Rieske domain. [2Fe-2S] cluster is bound by residues Cys-132, His-134, Cys-152, and His-155. Residues Cys-137 and Cys-154 are joined by a disulfide bond.

This sequence belongs to the Rieske iron-sulfur protein family. In terms of assembly, the main subunits of complex b-c1 are: cytochrome b, cytochrome c1 and the Rieske protein. [2Fe-2S] cluster serves as cofactor.

It is found in the cell membrane. It carries out the reaction a quinol + 2 Fe(III)-[cytochrome c](out) = a quinone + 2 Fe(II)-[cytochrome c](out) + 2 H(+)(out). In terms of biological role, component of the ubiquinol-cytochrome c reductase complex (complex III or cytochrome b-c1 complex), which is a respiratory chain that generates an electrochemical potential coupled to ATP synthesis. This is Ubiquinol-cytochrome c reductase iron-sulfur subunit (petA) from Paracoccus denitrificans.